Here is a 237-residue protein sequence, read N- to C-terminus: Phosphoribosylaminoimidazole-succinocarboxamide synthase (237 aa).

The protein belongs to the SAICAR synthetase family.

The enzyme catalyses 5-amino-1-(5-phospho-D-ribosyl)imidazole-4-carboxylate + L-aspartate + ATP = (2S)-2-[5-amino-1-(5-phospho-beta-D-ribosyl)imidazole-4-carboxamido]succinate + ADP + phosphate + 2 H(+). The protein operates within purine metabolism; IMP biosynthesis via de novo pathway; 5-amino-1-(5-phospho-D-ribosyl)imidazole-4-carboxamide from 5-amino-1-(5-phospho-D-ribosyl)imidazole-4-carboxylate: step 1/2. The protein is Phosphoribosylaminoimidazole-succinocarboxamide synthase of Edwardsiella ictaluri (strain 93-146).